The following is a 206-amino-acid chain: MILSDKDILNYVNSGRVCINPFNRNFVGPCSYDVTLGEEFITYNEDVYDVKKQLSHRSFKIDNSIMVCPLHHHLDEKIIERYKEKYSIDCVVSGGLLGTTNEYVELPNDVCAQYQGRSSFGRVFLQSHQTAGWIDSGFKGKITLEIVAYDKPVILYKNQRIGQLIFSKTLSPADIGYSDRKCSKYARQTSVMPSLIKKDFENDLEE.

DCTP is bound by residues 117-122 (RSSFGR), Asp-135, 143-145 (TLE), Gln-163, Tyr-177, Lys-184, and Gln-188. The Proton donor/acceptor role is filled by Glu-145.

Belongs to the dCTP deaminase family. In terms of assembly, homotrimer.

It carries out the reaction dCTP + 2 H2O = dUMP + NH4(+) + diphosphate. It functions in the pathway pyrimidine metabolism; dUMP biosynthesis; dUMP from dCTP: step 1/1. Its function is as follows. Bifunctional enzyme that catalyzes both the deamination of dCTP to dUTP and the hydrolysis of dUTP to dUMP without releasing the toxic dUTP intermediate. In Methanococcus vannielii (strain ATCC 35089 / DSM 1224 / JCM 13029 / OCM 148 / SB), this protein is dCTP deaminase, dUMP-forming.